Consider the following 507-residue polypeptide: ATP synthase subunit alpha, chloroplastic (507 aa).

170-177 (GDRQTGKT) contacts ATP.

Belongs to the ATPase alpha/beta chains family. F-type ATPases have 2 components, CF(1) - the catalytic core - and CF(0) - the membrane proton channel. CF(1) has five subunits: alpha(3), beta(3), gamma(1), delta(1), epsilon(1). CF(0) has four main subunits: a, b, b' and c.

Its subcellular location is the plastid. The protein resides in the chloroplast thylakoid membrane. The enzyme catalyses ATP + H2O + 4 H(+)(in) = ADP + phosphate + 5 H(+)(out). Its function is as follows. Produces ATP from ADP in the presence of a proton gradient across the membrane. The alpha chain is a regulatory subunit. The polypeptide is ATP synthase subunit alpha, chloroplastic (Buxus microphylla (Littleleaf boxwood)).